A 284-amino-acid chain; its full sequence is Tropomyosin alpha-3 chain (284 aa).

Position 1 is an N-acetylmethionine (M1). Residues 1–40 (MEAIKKKMQMLKLDKENALDRAEQAEAEQKQAEERSKQLE) are disordered. Positions 1–284 (MEAIKKKMQM…DHALNDMTSI (284 aa)) form a coiled coil. The span at 12–40 (KLDKENALDRAEQAEAEQKQAEERSKQLE) shows a compositional bias: basic and acidic residues. T53 is subject to Phosphothreonine. Phosphoserine occurs at positions 61 and 87. Residues T108 and T252 each carry the phosphothreonine modification. Y261 is modified (phosphotyrosine). S271 bears the Phosphoserine mark. At T282 the chain carries Phosphothreonine. S283 bears the Phosphoserine mark.

Belongs to the tropomyosin family. As to quaternary structure, homodimer. Heterodimer of an alpha (TPM1, TPM3 or TPM4) and a beta (TPM2) chain. Interacts with TMOD1. Interacts with TNNT1.

The protein resides in the cytoplasm. It is found in the cytoskeleton. Its function is as follows. Binds to actin filaments in muscle and non-muscle cells. Plays a central role, in association with the troponin complex, in the calcium dependent regulation of vertebrate striated muscle contraction. Smooth muscle contraction is regulated by interaction with caldesmon. In non-muscle cells is implicated in stabilizing cytoskeleton actin filaments. This chain is Tropomyosin alpha-3 chain (TPM3), found in Sus scrofa (Pig).